Reading from the N-terminus, the 346-residue chain is Protein MelA (346 aa).

2 consecutive VOC domains span residues 12-141 (GIEF…DFEA) and 155-305 (EVDH…IFTK). Positions 158, 237, and 314 each coordinate Fe cation.

The protein belongs to the 4HPPD family. Fe cation is required as a cofactor.

It is found in the cytoplasm. Its pathway is pigment biosynthesis; melanin biosynthesis. This chain is Protein MelA (melA), found in Shewanella colwelliana (Alteromonas colwelliana).